The primary structure comprises 124 residues: Large ribosomal subunit protein uL18 (124 aa).

The protein belongs to the universal ribosomal protein uL18 family. As to quaternary structure, part of the 50S ribosomal subunit; part of the 5S rRNA/L5/L18/L25 subcomplex. Contacts the 5S and 23S rRNAs.

Its function is as follows. This is one of the proteins that bind and probably mediate the attachment of the 5S RNA into the large ribosomal subunit, where it forms part of the central protuberance. The polypeptide is Large ribosomal subunit protein uL18 (Koribacter versatilis (strain Ellin345)).